Reading from the N-terminus, the 105-residue chain is MIKYVLISALLVVAVYSFTIEDNEDALLEEAEDELDTEEERRMALPPGAVCNGHKSDCQCFGAKYKCSCPLLWRFRRSAKCHCKKGWAWTAIKKRSCHNRYQWSG.

The first 17 residues, 1–17 (MIKYVLISALLVVAVYS), serve as a signal peptide directing secretion. Residues 18-41 (FTIEDNEDALLEEAEDELDTEEER) constitute a propeptide that is removed on maturation. 4 cysteine pairs are disulfide-bonded: Cys-51–Cys-67, Cys-58–Cys-97, Cys-60–Cys-83, and Cys-69–Cys-81.

Belongs to the neurotoxin 04 (omega-agtx) family. 01 (type I omega-agtx) subfamily. In terms of tissue distribution, expressed by the venom gland.

The protein localises to the secreted. In terms of biological role, insecticidal to house crickets. It induces an excitatory slow-onset impact that leads to irreversible spastic paralysis. It also modifies human voltage-gated potassium channel Kv1.5/KCNA5. Most likely, it binds to the voltage-sensing domain of the channel, suggesting it does not block the pore but prevents its opening at physiological membrane potentials. The recombinant peptide binds to the channel in an irreversible manner and slows down the hKv1.5 current activation kinetics. It is not toxic to mice, when intracranially injected (at 0.5 ug/g mouse). The protein is U2-lycotoxin-Ls1a of Lycosa singoriensis (Wolf spider).